The following is a 576-amino-acid chain: Eukaryotic translation initiation factor 3 subunit D (576 aa).

Positions 103–176 are disordered; the sequence is DSTKTRFGRG…KDYDKPQRNR (74 aa). The span at 110 to 122 shows a compositional bias: gly residues; it reads GRGGLARGRGQRG. Residues 165-176 are compositionally biased toward basic and acidic residues; sequence GWKDYDKPQRNR. An RNA gate region spans residues 304 to 318; it reads TLDMVTVNENAADAP.

The protein belongs to the eIF-3 subunit D family. Component of the eukaryotic translation initiation factor 3 (eIF-3) complex.

The protein localises to the cytoplasm. MRNA cap-binding component of the eukaryotic translation initiation factor 3 (eIF-3) complex, which is involved in protein synthesis of a specialized repertoire of mRNAs and, together with other initiation factors, stimulates binding of mRNA and methionyl-tRNAi to the 40S ribosome. The eIF-3 complex specifically targets and initiates translation of a subset of mRNAs involved in cell proliferation. In the eIF-3 complex, eif3d specifically recognizes and binds the 7-methylguanosine cap of a subset of mRNAs. This Botryotinia fuckeliana (strain B05.10) (Noble rot fungus) protein is Eukaryotic translation initiation factor 3 subunit D.